A 583-amino-acid polypeptide reads, in one-letter code: MSSIYLHGLSRRRRIGSVIVAIYMLDSCGAFLSASGSGRYPGFSYRGLSVVTENIRSIHSSRRLKLTVNATNKEMYERQDSIHTLPLSPIPVMPSQLFQELALSQLELLANSIPCADRPGVSKIKTMALYLPQENVNTGQLEFLPAIHYPHPSRERVFIANEAASGVAPALPRTLTTLPGFAHATSLLPGYPMVSGGSEASVGVVEEVICDLTSGAAALSVPLFSGSRTVGVLLVSPSISKRRKGSAWTKEDREQVGRAGKSLSLALSMDTERAALQMQNDRAARALSDSLHQIKNPLQAMRTYGKLLQRRIADLGLLSNEGMTPQLLEMAEHLLVQSDRLADRLKPVDTIVDSLSERTPFVLNPAAPTKTQDSLVSLATPLVPWESETLEFARESKTSGELVIFMPTKKVAASGSNGPSNSTTSFSGNGSDVSTYTEDDGAGEMPSSLFSEMDLEMSFLSDVLDPVLAAFRAIAEDRGIMFSHDDTEDLPGVTICPQALQEALINVIDNAFTYVFLPKPGSRFGPNPSAEVRIRLVQNSKGSDAGVTILVEDNGPGIPAETRDQIFDRGKDQALDWTLRKHW.

A chloroplast-targeting transit peptide spans 1-50; that stretch reads MSSIYLHGLSRRRRIGSVIVAIYMLDSCGAFLSASGSGRYPGFSYRGLSV. The interval 97 to 277 is GAF; it reads LFQELALSQL…SMDTERAALQ (181 aa). A [3Fe-4S] cluster-binding site is contributed by C115. Phosphohistidine; by autocatalysis is present on H292. The segment at 412-442 is disordered; that stretch reads AASGSNGPSNSTTSFSGNGSDVSTYTEDDGA. A compositionally biased stretch (low complexity) spans 414 to 431; it reads SGSNGPSNSTTSFSGNGS. One can recognise a Histidine kinase domain in the interval 447-583; that stretch reads SSLFSEMDLE…ALDWTLRKHW (137 aa).

It belongs to the chloroplast sensor kinase protein family. In terms of assembly, oligomerizes. [3Fe-4S] cluster serves as cofactor. Autophosphorylates, possibly on His-292.

The protein localises to the plastid. The protein resides in the chloroplast stroma. It catalyses the reaction ATP + protein L-histidine = ADP + protein N-phospho-L-histidine.. Its function is as follows. Sensor kinase that senses the plastoquinone (PQ) redox state involved in stoichiometry adjustment of both photosystems (e.g. long-term adaptation via transcriptional regulation of reaction center genes of photosystems I and II) and state transitions (e.g. short-term adaptation involving reversible post-translational phosphorylation of light-harvesting complex II, LHC II), thus linking photosynthesis with gene expression in chloroplasts. Reduced PQ suppresses its autophosphorylation activity. In Phaeodactylum tricornutum (strain CCAP 1055/1), this protein is Chloroplast sensor kinase, chloroplastic.